The sequence spans 290 residues: MTLPFRNDLLSSLLARCKTVPLSRFSQPLFWLLLLLLAHQCAGLTWRLLDLGSQQASQPWQPAMVASQGQGSARLDLSGISRLSLFGKAKQQAQAADAVAADAPKTQLNAQLNGVLASSDPAKSIAIIAHNGVQNSYGIGDFIDGTQAKIRQVFADRVIIERDGRDETLMLDGEEYGKPLPKPGNQDDKLSSVRSELLGNPGKITDYLNISPVRVDGRMVGYRLNPGSNPELFNQLGLVANDMAVSINGLDLRDNAQAMQAMQQVAGATEMTVTVERQGQLYDVYVGLSE.

Over 1 to 28 the chain is Cytoplasmic; sequence MTLPFRNDLLSSLLARCKTVPLSRFSQP. A helical membrane pass occupies residues 29–46; that stretch reads LFWLLLLLLAHQCAGLTW. Topologically, residues 47–290 are periplasmic; that stretch reads RLLDLGSQQA…LYDVYVGLSE (244 aa).

Belongs to the GSP C family.

The protein localises to the cell inner membrane. Its function is as follows. Involved in a type II secretion system (T2SS, formerly general secretion pathway, GSP) for the export of proteins. This chain is Type II secretion system protein C (exeC), found in Aeromonas hydrophila.